A 514-amino-acid chain; its full sequence is NAD(P)H-quinone oxidoreductase subunit 2 (514 aa).

14 consecutive transmembrane segments (helical) span residues 16 to 36 (IWPE…DLIV), 43 to 63 (WLPY…YFEW), 80 to 100 (LSIV…LMSV), 110 to 130 (LAEF…LSGA), 133 to 153 (LVMI…MTGY), 168 to 188 (LLIG…LYGL), 211 to 231 (LGLA…ISAV), 245 to 265 (PTPV…ALAI), 279 to 299 (WHFI…VVAL), 307 to 327 (MLAY…TANS), 335 to 355 (IFYL…IILF), 379 to 399 (LGLS…GFFG), 411 to 431 (GLYG…YYYI), and 467 to 487 (VGLV…NPLF).

It belongs to the complex I subunit 2 family. In terms of assembly, NDH-1 can be composed of about 15 different subunits; different subcomplexes with different compositions have been identified which probably have different functions.

Its subcellular location is the cellular thylakoid membrane. It catalyses the reaction a plastoquinone + NADH + (n+1) H(+)(in) = a plastoquinol + NAD(+) + n H(+)(out). The catalysed reaction is a plastoquinone + NADPH + (n+1) H(+)(in) = a plastoquinol + NADP(+) + n H(+)(out). Functionally, NDH-1 shuttles electrons from an unknown electron donor, via FMN and iron-sulfur (Fe-S) centers, to quinones in the respiratory and/or the photosynthetic chain. The immediate electron acceptor for the enzyme in this species is believed to be plastoquinone. Couples the redox reaction to proton translocation, and thus conserves the redox energy in a proton gradient. Cyanobacterial NDH-1 also plays a role in inorganic carbon-concentration. The polypeptide is NAD(P)H-quinone oxidoreductase subunit 2 (Gloeothece citriformis (strain PCC 7424) (Cyanothece sp. (strain PCC 7424))).